Reading from the N-terminus, the 181-residue chain is UPF0301 protein MXAN_2022 (181 aa).

Belongs to the UPF0301 (AlgH) family.

The protein is UPF0301 protein MXAN_2022 of Myxococcus xanthus (strain DK1622).